The primary structure comprises 235 residues: Small ribosomal subunit protein uS2 (235 aa).

The protein belongs to the universal ribosomal protein uS2 family.

This Anoxybacillus flavithermus (strain DSM 21510 / WK1) protein is Small ribosomal subunit protein uS2.